The primary structure comprises 193 residues: dTTP/UTP pyrophosphatase (193 aa).

Asp-71 functions as the Proton acceptor in the catalytic mechanism.

The protein belongs to the Maf family. YhdE subfamily. A divalent metal cation is required as a cofactor.

The protein resides in the cytoplasm. The catalysed reaction is dTTP + H2O = dTMP + diphosphate + H(+). The enzyme catalyses UTP + H2O = UMP + diphosphate + H(+). Nucleoside triphosphate pyrophosphatase that hydrolyzes dTTP and UTP. May have a dual role in cell division arrest and in preventing the incorporation of modified nucleotides into cellular nucleic acids. The chain is dTTP/UTP pyrophosphatase from Dictyoglomus thermophilum (strain ATCC 35947 / DSM 3960 / H-6-12).